We begin with the raw amino-acid sequence, 74 residues long: Sec-independent protein translocase protein TatA (74 aa).

The helical transmembrane segment at 1–21 (MGSFSIWHWLIVLLIVVLVFG) threads the bilayer.

Belongs to the TatA/E family. The Tat system comprises two distinct complexes: a TatABC complex, containing multiple copies of TatA, TatB and TatC subunits, and a separate TatA complex, containing only TatA subunits. Substrates initially bind to the TatABC complex, which probably triggers association of the separate TatA complex to form the active translocon.

The protein localises to the cell inner membrane. Its function is as follows. Part of the twin-arginine translocation (Tat) system that transports large folded proteins containing a characteristic twin-arginine motif in their signal peptide across membranes. TatA could form the protein-conducting channel of the Tat system. The polypeptide is Sec-independent protein translocase protein TatA (Nitrosospira multiformis (strain ATCC 25196 / NCIMB 11849 / C 71)).